A 437-amino-acid chain; its full sequence is Amino-acid acetyltransferase (437 aa).

Positions 289 to 437 (ECIRLATSFD…SKVLMLALDN (149 aa)) constitute an N-acetyltransferase domain.

Belongs to the acetyltransferase family. ArgA subfamily.

It localises to the cytoplasm. It catalyses the reaction L-glutamate + acetyl-CoA = N-acetyl-L-glutamate + CoA + H(+). It functions in the pathway amino-acid biosynthesis; L-arginine biosynthesis; N(2)-acetyl-L-ornithine from L-glutamate: step 1/4. The polypeptide is Amino-acid acetyltransferase (Haemophilus ducreyi (strain 35000HP / ATCC 700724)).